Reading from the N-terminus, the 174-residue chain is MSVKGWSASRPSEKILLTWKRFKRSATSGIKPTSQAKKAEPQVCKRKKSLRISMNHTRQQRDQTVSAMYSKKIREVERTILHLWRQKTVLKRIPKQDLQYDVIMFMITAVKRLRESKMLTVSWYQQALQVIGDSKEEREALMIALKILAKIIPKEMLHLTGDILLALTQTEQLM.

Belongs to the morbillivirus protein C family.

This Phocine distemper virus (PDV) protein is Protein C (P/V/C).